We begin with the raw amino-acid sequence, 110 residues long: Small ribosomal subunit protein bS16 (110 aa).

The segment at 87-110 (ARNNPEKAVPRKERKAAAEAAAKK) is disordered.

This sequence belongs to the bacterial ribosomal protein bS16 family.

In Rhodopseudomonas palustris (strain BisA53), this protein is Small ribosomal subunit protein bS16.